The following is a 196-amino-acid chain: MAASMTKPISITSLGFYSDRKNIAFSDCISICSGFRHSRPSCLDLVTKSPSNNSRVLPVVSAQISSDYIPDSKFYKVEAIVRPWRIQQVSSALLKIGIRGVTVSDVRGFGAQGGSTERHGGSEFSEDKFVAKVKMEIVVKKDQVESVINTIIEGARTGEIGDGKIFVLPVSDVIRVRTGERGEKAEKMTGDMLSPS.

A chloroplast-targeting transit peptide spans 1–61 (MAASMTKPIS…NNSRVLPVVS (61 aa)). Residues 108 to 112 (GFGAQ) and 161 to 164 (GDGK) contribute to the ATP site. Residue Gly-110 coordinates Mg(2+).

Belongs to the P(II) protein family. In terms of assembly, homodimer. Interacts with NAGK. Interaction with NAGK is dependent of MgATP and inhibited by 2-oxoglutarate, arginine, glutamate, citrate, and oxaloacetate.

The protein resides in the plastid. It is found in the chloroplast. Participates in sensing carbon and organic nitrogen status and regulates some steps of primary carbon and nitrogen metabolism. Required for nitrite uptake in chloroplasts and regulates arginine biosynthesis through interaction with acetylglutamate kinase (NAGK) in chloroplasts. Regulates fatty acids synthesis in chloroplasts by interacting with the acetyl-CoA carboxylase complex and inhibiting acetyl-CoA carboxylase (ACCase) activity. The polypeptide is Nitrogen regulatory protein P-II homolog (GLB1) (Arabidopsis thaliana (Mouse-ear cress)).